The following is a 368-amino-acid chain: Ribosomal RNA large subunit methyltransferase M (368 aa).

S-adenosyl-L-methionine is bound by residues Ser199, 232 to 235 (APGG), Asp251, Asp271, and Asp287. Lys316 serves as the catalytic Proton acceptor.

The protein belongs to the class I-like SAM-binding methyltransferase superfamily. RNA methyltransferase RlmE family. RlmM subfamily. Monomer.

The protein resides in the cytoplasm. It carries out the reaction cytidine(2498) in 23S rRNA + S-adenosyl-L-methionine = 2'-O-methylcytidine(2498) in 23S rRNA + S-adenosyl-L-homocysteine + H(+). Functionally, catalyzes the 2'-O-methylation at nucleotide C2498 in 23S rRNA. In Aromatoleum aromaticum (strain DSM 19018 / LMG 30748 / EbN1) (Azoarcus sp. (strain EbN1)), this protein is Ribosomal RNA large subunit methyltransferase M.